The primary structure comprises 884 residues: Valine--tRNA ligase (884 aa).

A 'HIGH' region motif is present at residues 43 to 53; the sequence is PNVTGSLHIGH. The 'KMSKS' region signature appears at 530-534; sequence KMSKS. Lys-533 is an ATP binding site. Positions 817-884 form a coiled coil; the sequence is VIDLDAERGR…KLKAALERLM (68 aa).

This sequence belongs to the class-I aminoacyl-tRNA synthetase family. ValS type 1 subfamily. As to quaternary structure, monomer.

Its subcellular location is the cytoplasm. It catalyses the reaction tRNA(Val) + L-valine + ATP = L-valyl-tRNA(Val) + AMP + diphosphate. Catalyzes the attachment of valine to tRNA(Val). As ValRS can inadvertently accommodate and process structurally similar amino acids such as threonine, to avoid such errors, it has a 'posttransfer' editing activity that hydrolyzes mischarged Thr-tRNA(Val) in a tRNA-dependent manner. This Zymomonas mobilis subsp. mobilis (strain ATCC 31821 / ZM4 / CP4) protein is Valine--tRNA ligase.